Reading from the N-terminus, the 745-residue chain is UPF0508 protein YJR030C (745 aa).

The protein belongs to the UPF0508 family.

This is UPF0508 protein YJR030C from Saccharomyces cerevisiae (strain ATCC 204508 / S288c) (Baker's yeast).